The primary structure comprises 261 residues: MRVLLTNDDGFDSVGMRVLRDVVSGHFAEVWVSAPARDCSAASRALSVRTPIKTHMRGEREFVVHGTPADSAVIGICEMTSTGKRPDLVISGINYGANTGFTVPYSGTIAAAAAAFDIGVPAIAISQQYNGKRCDNNVETSWQNSRKSVMALVSRLLRDTMWHGKCIMSINVPYSDVQGVKFAGHSCDDGHIKWDGPSMERREITSGDGRCVSYVFDDMRSPNSNDNASDTQLLEQGYIVVTPIGHSMTDHATLDKYCGLQ.

Positions 8, 9, 40, and 94 each coordinate a divalent metal cation.

The protein belongs to the SurE nucleotidase family. A divalent metal cation is required as a cofactor.

Its subcellular location is the cytoplasm. The catalysed reaction is a ribonucleoside 5'-phosphate + H2O = a ribonucleoside + phosphate. In terms of biological role, nucleotidase that shows phosphatase activity on nucleoside 5'-monophosphates. This is 5'-nucleotidase SurE from Anaplasma marginale (strain Florida).